Consider the following 526-residue polypeptide: 3-hydroxy-3-methylglutaryl-coenzyme A reductase 2 (526 aa).

Active-site charge relay system residues include Glu193, Lys325, and Asp401. The active-site Proton donor is the His499. Positions 503-526 are disordered; sequence NRKTEAPAPQADTISMTHNLPHSD. The segment covering 514 to 526 has biased composition (polar residues); the sequence is DTISMTHNLPHSD.

The protein belongs to the HMG-CoA reductase family.

It catalyses the reaction (R)-mevalonate + 2 NADP(+) + CoA = (3S)-3-hydroxy-3-methylglutaryl-CoA + 2 NADPH + 2 H(+). It participates in metabolic intermediate biosynthesis; (R)-mevalonate biosynthesis; (R)-mevalonate from acetyl-CoA: step 3/3. In terms of biological role, this transmembrane glycoprotein is involved in the control of cholesterol biosynthesis. It is the rate-limiting enzyme of the sterol biosynthesis. The protein is 3-hydroxy-3-methylglutaryl-coenzyme A reductase 2 (hmgB) of Dictyostelium discoideum (Social amoeba).